Here is a 349-residue protein sequence, read N- to C-terminus: tRNA pseudouridine synthase D (349 aa).

Phenylalanine 27 provides a ligand contact to substrate. Aspartate 80 (nucleophile) is an active-site residue. Residue asparagine 129 coordinates substrate. The region spanning 155 to 303 (GVPNYFGAQR…VEAARRAMLL (149 aa)) is the TRUD domain. Phenylalanine 329 contacts substrate.

It belongs to the pseudouridine synthase TruD family.

The enzyme catalyses uridine(13) in tRNA = pseudouridine(13) in tRNA. Its function is as follows. Responsible for synthesis of pseudouridine from uracil-13 in transfer RNAs. The sequence is that of tRNA pseudouridine synthase D from Escherichia coli (strain SE11).